The chain runs to 392 residues: MMLLLAQWLQGMSSELGFLRVFQYLTMRAVLAALTALLIGLAAGSWVIGKLMALKIGQPIRGYAPQSHLSKSGTPTMGGVLILLSIALSTLLWFDLSNRFVWIVLLVTLGFGAIGWVDDWRKVVDKNPEGMRSREKYLWQSLIGLMAALYLVFCISENSNAKVLELFISWMRSGFALDLPPKAGLQLPFFKAVSYPLGVLGFVLLTYLVIVGSSNAVNLTDGLDGLAIMPVVMVGSALGVFAYVTGSAVYSRYLFFPHIPGSGELLIFCAAMAGAGLAFLWFNAHPAQVFMGDVGALALGAALGTIAIIVRQEIVLAVMGGIFVAEALSVMLQVGWFKYTRYRYGEGRRLLKMAPLHHHFEKSGWKETQVVVRFWIITMLLCLVGLSTLKLR.

The next 10 membrane-spanning stretches (helical) occupy residues 29–49, 76–96, 100–120, 137–157, 192–212, 225–245, 262–282, 289–309, 314–334, and 369–389; these read AVLA…WVIG, TMGG…WFDL, FVWI…VDDW, YLWQ…CISE, AVSY…VIVG, GLAI…AYVT, SGEL…FLWF, VFMG…IAII, IVLA…MLQV, and QVVV…LSTL.

Belongs to the glycosyltransferase 4 family. MraY subfamily. Mg(2+) serves as cofactor.

It is found in the cell inner membrane. It carries out the reaction UDP-N-acetyl-alpha-D-muramoyl-L-alanyl-gamma-D-glutamyl-meso-2,6-diaminopimeloyl-D-alanyl-D-alanine + di-trans,octa-cis-undecaprenyl phosphate = di-trans,octa-cis-undecaprenyl diphospho-N-acetyl-alpha-D-muramoyl-L-alanyl-D-glutamyl-meso-2,6-diaminopimeloyl-D-alanyl-D-alanine + UMP. Its pathway is cell wall biogenesis; peptidoglycan biosynthesis. Catalyzes the initial step of the lipid cycle reactions in the biosynthesis of the cell wall peptidoglycan: transfers peptidoglycan precursor phospho-MurNAc-pentapeptide from UDP-MurNAc-pentapeptide onto the lipid carrier undecaprenyl phosphate, yielding undecaprenyl-pyrophosphoryl-MurNAc-pentapeptide, known as lipid I. The chain is Phospho-N-acetylmuramoyl-pentapeptide-transferase from Verminephrobacter eiseniae (strain EF01-2).